Reading from the N-terminus, the 95-residue chain is Small ribosomal subunit protein uS15 (95 aa).

It belongs to the universal ribosomal protein uS15 family. As to quaternary structure, part of the 30S ribosomal subunit. Forms a bridge to the 50S subunit in the 70S ribosome, contacting the 23S rRNA.

Its function is as follows. One of the primary rRNA binding proteins, it binds directly to 16S rRNA where it helps nucleate assembly of the platform of the 30S subunit by binding and bridging several RNA helices of the 16S rRNA. Functionally, forms an intersubunit bridge (bridge B4) with the 23S rRNA of the 50S subunit in the ribosome. This is Small ribosomal subunit protein uS15 from Sulfurihydrogenibium sp. (strain YO3AOP1).